A 572-amino-acid polypeptide reads, in one-letter code: MVIILLGLCTLGFPRTAFCPSIMTNSTVSINTPPPYLTLACNEKLPTVMSIAGSDSSGGAGVEADIKTITAHRCYAMTCVTTLTAQTPVKVYGAQNIPKKMVSQILDANLQDMKCNVIKTGMLTVDAIEVLHEKLLQLGENRPKLVIDPVLCAASDSSPTGKDVVSLIIEKISPFADILTPNISDCFMLLGENREVSKLQDVLEIAKDLSRITNCSNILVKGGHIPCDDGKEKHITDVLYLGAEQKFITFKGQFVNTTRTHGAGCTLASAIASNLARGYSLSQSVYGGIEYVQNAIAIGCDVTKKAVKVGPINHVYAVEIPLEKMLTDECFTASDAVPKKPIEGSLDKIPGGSFFNYLINHPKVKPHWDAYVNHEFVKRVADGTLERKKFQFFIEQDYLYLIDYVRVCCVTGSKSPTLEDLEKDLVIADCARNELNEHERRLREEFGVKDPDYLQKIKRGPALRAYCRYLIDISRRGNWQEIVVALNPCLMGYVYAVDKVKDKITAAEGSIYSEWCDTCASSFCYQAVLEGERLMNHILETYPPDQLDSLVTIFARGCELETNFWTAAMEYE.

Positions 1–19 (MVIILLGLCTLGFPRTAFC) are cleaved as a signal peptide.

It belongs to the thiaminase-2 family.

It is found in the secreted. In terms of biological role, is not required for thiamine biosynthesis. The chain is Thiamine biosynthesis protein THI22 (THI22) from Saccharomyces cerevisiae (strain ATCC 204508 / S288c) (Baker's yeast).